The primary structure comprises 227 residues: Cytochrome c oxidase subunit 2 (227 aa).

The Mitochondrial intermembrane portion of the chain corresponds to methionine 1 to serine 14. The helical transmembrane segment at proline 15–methionine 45 threads the bilayer. Residues leucine 46–glutamine 59 are Mitochondrial matrix-facing. A helical membrane pass occupies residues glutamate 60 to methionine 87. Over aspartate 88–isoleucine 227 the chain is Mitochondrial intermembrane. Cu cation-binding residues include histidine 161, cysteine 196, glutamate 198, cysteine 200, histidine 204, and methionine 207. Glutamate 198 provides a ligand contact to Mg(2+). Tyrosine 218 is subject to Phosphotyrosine.

Belongs to the cytochrome c oxidase subunit 2 family. As to quaternary structure, component of the cytochrome c oxidase (complex IV, CIV), a multisubunit enzyme composed of 14 subunits. The complex is composed of a catalytic core of 3 subunits MT-CO1, MT-CO2 and MT-CO3, encoded in the mitochondrial DNA, and 11 supernumerary subunits COX4I, COX5A, COX5B, COX6A, COX6B, COX6C, COX7A, COX7B, COX7C, COX8 and NDUFA4, which are encoded in the nuclear genome. The complex exists as a monomer or a dimer and forms supercomplexes (SCs) in the inner mitochondrial membrane with NADH-ubiquinone oxidoreductase (complex I, CI) and ubiquinol-cytochrome c oxidoreductase (cytochrome b-c1 complex, complex III, CIII), resulting in different assemblies (supercomplex SCI(1)III(2)IV(1) and megacomplex MCI(2)III(2)IV(2)). Found in a complex with TMEM177, COA6, COX18, COX20, SCO1 and SCO2. Interacts with TMEM177 in a COX20-dependent manner. Interacts with COX20. Interacts with COX16. Cu cation serves as cofactor.

Its subcellular location is the mitochondrion inner membrane. It catalyses the reaction 4 Fe(II)-[cytochrome c] + O2 + 8 H(+)(in) = 4 Fe(III)-[cytochrome c] + 2 H2O + 4 H(+)(out). In terms of biological role, component of the cytochrome c oxidase, the last enzyme in the mitochondrial electron transport chain which drives oxidative phosphorylation. The respiratory chain contains 3 multisubunit complexes succinate dehydrogenase (complex II, CII), ubiquinol-cytochrome c oxidoreductase (cytochrome b-c1 complex, complex III, CIII) and cytochrome c oxidase (complex IV, CIV), that cooperate to transfer electrons derived from NADH and succinate to molecular oxygen, creating an electrochemical gradient over the inner membrane that drives transmembrane transport and the ATP synthase. Cytochrome c oxidase is the component of the respiratory chain that catalyzes the reduction of oxygen to water. Electrons originating from reduced cytochrome c in the intermembrane space (IMS) are transferred via the dinuclear copper A center (CU(A)) of subunit 2 and heme A of subunit 1 to the active site in subunit 1, a binuclear center (BNC) formed by heme A3 and copper B (CU(B)). The BNC reduces molecular oxygen to 2 water molecules using 4 electrons from cytochrome c in the IMS and 4 protons from the mitochondrial matrix. The polypeptide is Cytochrome c oxidase subunit 2 (MT-CO2) (Oenomys hypoxanthus (Rufous-nosed rat)).